The sequence spans 275 residues: Fructose-2,6-bisphosphatase TIGAR (275 aa).

Catalysis depends on His-11, which acts as the Tele-phosphohistidine intermediate. The Proton donor/acceptor role is filled by Glu-89.

This sequence belongs to the phosphoglycerate mutase family.

It is found in the cytoplasm. It localises to the nucleus. The protein localises to the mitochondrion. It catalyses the reaction beta-D-fructose 2,6-bisphosphate + H2O = beta-D-fructose 6-phosphate + phosphate. Its function is as follows. Fructose-bisphosphatase hydrolyzing fructose-2,6-bisphosphate as well as fructose-1,6-bisphosphate. Acts as a negative regulator of glycolysis by lowering intracellular levels of fructose-2,6-bisphosphate in a p53/TP53-dependent manner, resulting in the pentose phosphate pathway (PPP) activation and NADPH production. Contributes to the generation of reduced glutathione to cause a decrease in intracellular reactive oxygen species (ROS) content, correlating with its ability to protect cells from oxidative or metabolic stress-induced cell death. May play a role in mitophagy inhibition. In Xenopus laevis (African clawed frog), this protein is Fructose-2,6-bisphosphatase TIGAR.